Here is a 303-residue protein sequence, read N- to C-terminus: Recombination-associated protein RdgC (303 aa).

It belongs to the RdgC family.

The protein localises to the cytoplasm. Its subcellular location is the nucleoid. In terms of biological role, may be involved in recombination. This Yersinia enterocolitica serotype O:8 / biotype 1B (strain NCTC 13174 / 8081) protein is Recombination-associated protein RdgC.